Reading from the N-terminus, the 89-residue chain is Small ribosomal subunit protein uS19 (89 aa).

This sequence belongs to the universal ribosomal protein uS19 family.

Functionally, protein S19 forms a complex with S13 that binds strongly to the 16S ribosomal RNA. This chain is Small ribosomal subunit protein uS19, found in Xanthomonas campestris pv. campestris (strain 8004).